The sequence spans 900 residues: Nitrate reductase [NADH] (900 aa).

Mo-molybdopterin is bound at residue cysteine 172. The region spanning 521-596 (TKMYSLSEVK…LEDYRVGELI (76 aa)) is the Cytochrome b5 heme-binding domain. 2 residues coordinate heme: histidine 556 and histidine 579. Residues 644–756 (REKIPCKLIS…KGPLGHIEYT (113 aa)) enclose the FAD-binding FR-type domain. FAD is bound by residues 696-699 (RAYT), 713-717 (VVKVY), phenylalanine 718, phenylalanine 725, 730-732 (AMS), and threonine 783.

It belongs to the nitrate reductase family. In terms of assembly, homodimer. The cofactor is FAD. It depends on heme as a cofactor. Mo-molybdopterin is required as a cofactor.

It carries out the reaction nitrite + NAD(+) + H2O = nitrate + NADH + H(+). Its function is as follows. Nitrate reductase is a key enzyme involved in the first step of nitrate assimilation in plants, fungi and bacteria. The polypeptide is Nitrate reductase [NADH] (NIA) (Lotus japonicus (Lotus corniculatus var. japonicus)).